A 379-amino-acid chain; its full sequence is Cytochrome b (379 aa).

A run of 4 helical transmembrane segments spans residues 33–53, 77–98, 113–133, and 178–198; these read FGSL…FLAM, WMIR…FMHV, WNIG…GYVL, and FFAF…VHLL. Heme b-binding residues include His-83 and His-97. Residues His-182 and His-196 each contribute to the heme b site. His-201 is a binding site for a ubiquinone. Transmembrane regions (helical) follow at residues 226–246, 288–308, 320–340, and 347–367; these read IKDI…VLFS, LGGV…PMLH, LSQC…WIGG, and FITI…XLMP.

The protein belongs to the cytochrome b family. The cytochrome bc1 complex contains 11 subunits: 3 respiratory subunits (MT-CYB, CYC1 and UQCRFS1), 2 core proteins (UQCRC1 and UQCRC2) and 6 low-molecular weight proteins (UQCRH/QCR6, UQCRB/QCR7, UQCRQ/QCR8, UQCR10/QCR9, UQCR11/QCR10 and a cleavage product of UQCRFS1). This cytochrome bc1 complex then forms a dimer. It depends on heme b as a cofactor.

Its subcellular location is the mitochondrion inner membrane. In terms of biological role, component of the ubiquinol-cytochrome c reductase complex (complex III or cytochrome b-c1 complex) that is part of the mitochondrial respiratory chain. The b-c1 complex mediates electron transfer from ubiquinol to cytochrome c. Contributes to the generation of a proton gradient across the mitochondrial membrane that is then used for ATP synthesis. The sequence is that of Cytochrome b (MT-CYB) from Chrotogale owstoni (Owston's palm civet).